Consider the following 634-residue polypeptide: Chaperone protein HtpG (634 aa).

The interval 1 to 344 (MSETVSQNKE…SNDLPLNVSR (344 aa)) is a; substrate-binding. Residues 345–561 (EILQDNKVTQ…DYEMGTQMAK (217 aa)) form a b region. Residues 562–634 (LLAAAGQAVP…GAINKLLTKV (73 aa)) form a c region.

It belongs to the heat shock protein 90 family. In terms of assembly, homodimer.

The protein resides in the cytoplasm. Functionally, molecular chaperone. Has ATPase activity. This is Chaperone protein HtpG from Vibrio parahaemolyticus serotype O3:K6 (strain RIMD 2210633).